The chain runs to 62 residues: Large ribosomal subunit protein bL28 (62 aa).

The protein belongs to the bacterial ribosomal protein bL28 family.

The chain is Large ribosomal subunit protein bL28 from Koribacter versatilis (strain Ellin345).